Consider the following 229-residue polypeptide: MRMEKIDENTIRVLLENDDLEERGITGLDLLSNHKKIERFFYSILEEVDQDHVFANNDAVTFQVLPNEQGLELLISKNLSNLDLNKAQSEMVQGKDGITEYIKDQLLKRDTASSEDDEEDDEIESYLNQADNPTKQVVLGFDTFEDWIALAQQLHIESGVSNLFVYKHQYYAQLVFFLENTTETFVQDDLAVANEFGHKTNYTADFLSEYGQRVMENSALELTRYYFKD.

The protein belongs to the MecA family. Homodimer.

Functionally, enables the recognition and targeting of unfolded and aggregated proteins to the ClpC protease or to other proteins involved in proteolysis. In Latilactobacillus sakei subsp. sakei (strain 23K) (Lactobacillus sakei subsp. sakei), this protein is Adapter protein MecA.